A 270-amino-acid chain; its full sequence is SAGA-associated factor 29 homolog A (270 aa).

Serine 2 is modified (N-acetylserine). The segment at 85-113 (LPSGPTGQQRRKLEGNEQKRKRMKVDTDV) is disordered. Basic and acidic residues predominate over residues 95–113 (RKLEGNEQKRKRMKVDTDV). The SGF29 C-terminal domain maps to 125-270 (EAYASLKGEQ…VVALPEGHRQ (146 aa)). Histone H3K4me3 N-terminus binding stretches follow at residues 168-170 (DEE) and 217-220 (GTTA). The interval 242–245 (FDDD) is histone H3K4me3 binding.

The protein belongs to the SGF29 family. In terms of tissue distribution, expressed in roots, rosette leaves, cauline leaves, stems and flowers.

It localises to the nucleus. In terms of biological role, chromatin reader component of the transcription regulatory histone acetylation (HAT) complex SAGA. Involved in salt stress tolerance. Enhances the effect of ADA2B in the positive regulation of salt-induced gene expression. This chain is SAGA-associated factor 29 homolog A, found in Arabidopsis thaliana (Mouse-ear cress).